The sequence spans 393 residues: Argininosuccinate synthase (393 aa).

Residues 7–15 (AYSGGLDTS) and Ala-34 each bind ATP. L-citrulline is bound by residues Tyr-85 and Ser-90. Gly-115 contributes to the ATP binding site. L-aspartate is bound by residues Thr-117, Asn-121, and Asp-122. L-citrulline is bound at residue Asn-121. L-citrulline contacts are provided by Arg-125, Ser-176, Ser-185, Glu-261, and Tyr-273.

This sequence belongs to the argininosuccinate synthase family. Type 1 subfamily. In terms of assembly, homotetramer.

It is found in the cytoplasm. The enzyme catalyses L-citrulline + L-aspartate + ATP = 2-(N(omega)-L-arginino)succinate + AMP + diphosphate + H(+). It participates in amino-acid biosynthesis; L-arginine biosynthesis; L-arginine from L-ornithine and carbamoyl phosphate: step 2/3. This is Argininosuccinate synthase from Ehrlichia chaffeensis (strain ATCC CRL-10679 / Arkansas).